We begin with the raw amino-acid sequence, 222 residues long: Protein-L-isoaspartate O-methyltransferase (222 aa).

Serine 68 is a catalytic residue.

The protein belongs to the methyltransferase superfamily. L-isoaspartyl/D-aspartyl protein methyltransferase family.

Its subcellular location is the cytoplasm. It carries out the reaction [protein]-L-isoaspartate + S-adenosyl-L-methionine = [protein]-L-isoaspartate alpha-methyl ester + S-adenosyl-L-homocysteine. Functionally, catalyzes the methyl esterification of L-isoaspartyl residues in peptides and proteins that result from spontaneous decomposition of normal L-aspartyl and L-asparaginyl residues. It plays a role in the repair and/or degradation of damaged proteins. The protein is Protein-L-isoaspartate O-methyltransferase of Koribacter versatilis (strain Ellin345).